A 398-amino-acid polypeptide reads, in one-letter code: Phytoene synthase 2, chloroplastic (398 aa).

Residues 1 to 80 (MASSSSAAAL…EEAVYEVVLR (80 aa)) constitute a chloroplast transit peptide.

It belongs to the phytoene/squalene synthase family. Expressed in leaves and endosperm. Expressed in developing leaves.

Its subcellular location is the plastid. The protein localises to the chloroplast membrane. It localises to the chloroplast. It is found in the plastoglobule. The catalysed reaction is 2 (2E,6E,10E)-geranylgeranyl diphosphate = 15-cis-phytoene + 2 diphosphate. Its function is as follows. Catalyzes the conversion of geranylgeranyl diphosphate to phytoene. Mediates the first committed step in carotenoid biosynthesis. The chain is Phytoene synthase 2, chloroplastic from Oryza sativa subsp. japonica (Rice).